A 63-amino-acid polypeptide reads, in one-letter code: Large ribosomal subunit protein bL28A (63 aa).

Belongs to the bacterial ribosomal protein bL28 family.

In Nocardia farcinica (strain IFM 10152), this protein is Large ribosomal subunit protein bL28A.